Reading from the N-terminus, the 394-residue chain is Methylthioribose kinase (394 aa).

Residues Asn44, Lys61, and 115-117 contribute to the ATP site; that span reads EDL. Asp233 provides a ligand contact to substrate. 250–252 provides a ligand contact to ATP; that stretch reads DPE. Arg337 contacts substrate.

The protein belongs to the methylthioribose kinase family. In terms of assembly, homodimer.

It carries out the reaction 5-(methylsulfanyl)-D-ribose + ATP = 5-(methylsulfanyl)-alpha-D-ribose 1-phosphate + ADP + H(+). Its pathway is amino-acid biosynthesis; L-methionine biosynthesis via salvage pathway; S-methyl-5-thio-alpha-D-ribose 1-phosphate from S-methyl-5'-thioadenosine (hydrolase route): step 2/2. In terms of biological role, catalyzes the phosphorylation of methylthioribose into methylthioribose-1-phosphate. The polypeptide is Methylthioribose kinase (Bacillus velezensis (strain DSM 23117 / BGSC 10A6 / LMG 26770 / FZB42) (Bacillus amyloliquefaciens subsp. plantarum)).